We begin with the raw amino-acid sequence, 506 residues long: Beta-glucosidase 9 (506 aa).

Residues 1–22 (MKHFSLLFIFLVILLATSYSDA) form the signal peptide. Residues Q42, H139, and 184–185 (NE) contribute to the a beta-D-glucoside site. E185 serves as the catalytic Proton donor. An intrachain disulfide couples C204 to C212. Residues N211 and N216 are each glycosylated (N-linked (GlcNAc...) asparagine). Y328 serves as a coordination point for a beta-D-glucoside. N-linked (GlcNAc...) asparagine glycosylation occurs at N363. E396 lines the a beta-D-glucoside pocket. Residue E396 is the Nucleophile of the active site. N-linked (GlcNAc...) asparagine glycosylation is present at N429. W439 and F455 together coordinate a beta-D-glucoside. N461, N483, and N499 each carry an N-linked (GlcNAc...) asparagine glycan.

It belongs to the glycosyl hydrolase 1 family.

It catalyses the reaction Hydrolysis of terminal, non-reducing beta-D-glucosyl residues with release of beta-D-glucose.. The sequence is that of Beta-glucosidase 9 from Arabidopsis thaliana (Mouse-ear cress).